The sequence spans 491 residues: Nicotinamide phosphoribosyltransferase (491 aa).

Methionine 1 is modified (N-acetylmethionine). A Phosphotyrosine modification is found at tyrosine 188. Arginine 196 contacts diphosphate. Aspartate 219 is a beta-nicotinamide D-ribonucleotide binding site. Diphosphate contacts are provided by histidine 247 and arginine 311. Residues 311–313, 353–354, glycine 384, and arginine 392 each bind beta-nicotinamide D-ribonucleotide; these read RPD and GD. Serine 472 is subject to Phosphoserine.

It belongs to the NAPRTase family. Homodimer. As to expression, expressed in various tissues. At the highest level in liver and at the second highest in heart. The amount is higher in heart than in lung.

The protein resides in the nucleus. It is found in the cytoplasm. The protein localises to the secreted. The enzyme catalyses beta-nicotinamide D-ribonucleotide + diphosphate = 5-phospho-alpha-D-ribose 1-diphosphate + nicotinamide + H(+). The protein operates within cofactor biosynthesis; NAD(+) biosynthesis; nicotinamide D-ribonucleotide from 5-phospho-alpha-D-ribose 1-diphosphate and nicotinamide: step 1/1. Its function is as follows. Catalyzes the condensation of nicotinamide with 5-phosphoribosyl-1-pyrophosphate to yield nicotinamide mononucleotide, an intermediate in the biosynthesis of NAD. It is the rate limiting component in the mammalian NAD biosynthesis pathway. The secreted form behaves both as a cytokine with immunomodulating properties and an adipokine with anti-diabetic properties, it has no enzymatic activity, partly because of lack of activation by ATP, which has a low level in extracellular space and plasma. Plays a role in the modulation of circadian clock function. NAMPT-dependent oscillatory production of NAD regulates oscillation of clock target gene expression by releasing the core clock component: CLOCK-BMAL1 heterodimer from NAD-dependent SIRT1-mediated suppression. In Rattus norvegicus (Rat), this protein is Nicotinamide phosphoribosyltransferase (Nampt).